Here is a 458-residue protein sequence, read N- to C-terminus: tRNA(Ile)-lysidine synthase (458 aa).

35–40 lines the ATP pocket; it reads SGGVDS.

Belongs to the tRNA(Ile)-lysidine synthase family.

The protein resides in the cytoplasm. It catalyses the reaction cytidine(34) in tRNA(Ile2) + L-lysine + ATP = lysidine(34) in tRNA(Ile2) + AMP + diphosphate + H(+). Its function is as follows. Ligates lysine onto the cytidine present at position 34 of the AUA codon-specific tRNA(Ile) that contains the anticodon CAU, in an ATP-dependent manner. Cytidine is converted to lysidine, thus changing the amino acid specificity of the tRNA from methionine to isoleucine. The protein is tRNA(Ile)-lysidine synthase of Nitrosomonas europaea (strain ATCC 19718 / CIP 103999 / KCTC 2705 / NBRC 14298).